Reading from the N-terminus, the 149-residue chain is Transcriptional repressor NrdR (149 aa).

Residues 3 to 34 (CPFCSEQETKVIDSRLVAEGQQVRRRRECMVC) fold into a zinc finger. One can recognise an ATP-cone domain in the interval 49-139 (PRVIKRDGSR…VYRSFEDIRE (91 aa)).

It belongs to the NrdR family. Zn(2+) serves as cofactor.

Functionally, negatively regulates transcription of bacterial ribonucleotide reductase nrd genes and operons by binding to NrdR-boxes. The polypeptide is Transcriptional repressor NrdR (Alteromonas mediterranea (strain DSM 17117 / CIP 110805 / LMG 28347 / Deep ecotype)).